The following is a 386-amino-acid chain: Zinc finger protein 385A (386 aa).

A Matrin-type 1 zinc finger spans residues 74–98 (ISCNICQIRFNSQSQAEAHYKGNRH). Residues 90–193 (EAHYKGNRHA…ASLPGGSKEE (104 aa)) form a disordered region. A compositionally biased stretch (basic and acidic residues) spans 103-121 (KGIEAAKTRGREPGVREPG). The tract at residues 145-351 (NGLGPAPGSP…AGSPLSLRPA (207 aa)) is necessary for binding to ITPR1, CEBPA and p53/TP53 mRNAs. A Phosphoserine modification is found at S185. The Matrin-type 2 zinc-finger motif lies at 201–225 (LYCALCKVAVNSLSQLEAHNKGTKH). T248 carries the phosphothreonine modification. The Matrin-type 3 zinc-finger motif lies at 261–285 (FHCEICNVKVNSEVQLKQHISSRRH). The segment at 279-309 (HISSRRHRDGVAGKPNPLLSRHKKSRGAGEL) is disordered.

As to quaternary structure, interacts with ELAVL1; the interaction is indirect, mRNA-dependent and may regulate p53/TP53 expression. Interacts with p53/TP53; the interaction is direct and enhances p53/TP53 transactivation functions on cell-cycle arrest target genes, resulting in growth arrest. In terms of processing, ubiquitinated upon prolonged exposure to genotoxic stress, which leads to proteasomal degradation of ZNF385A and releases p53/TP53 from cell-cycle arrest target gene promoters. Expressed predominantly in the retina.

The protein localises to the cytoplasm. It localises to the nucleus. Its subcellular location is the nucleolus. The protein resides in the cell projection. It is found in the dendrite. Its function is as follows. RNA-binding protein that affects the localization and the translation of a subset of mRNA. May play a role in adipogenesis through binding to the 3'-UTR of CEBPA mRNA and regulation of its translation. Targets ITPR1 mRNA to dendrites in Purkinje cells, and may regulate its activity-dependent translation. With ELAVL1, binds the 3'-UTR of p53/TP53 mRNAs to control their nuclear export induced by CDKN2A. Hence, may regulate p53/TP53 expression and mediate in part the CDKN2A anti-proliferative activity. May also bind CCNB1 mRNA. Alternatively, may also regulate p53/TP53 activity through direct protein-protein interaction. Interacts with p53/TP53 and promotes cell-cycle arrest over apoptosis enhancing preferentially the DNA binding and transactivation of p53/TP53 on cell-cycle arrest target genes over proapoptotic target genes. May also regulate the ubiquitination and stability of CDKN1A promoting DNA damage-induced cell cycle arrest. Also plays a role in megakaryocytes differentiation. The protein is Zinc finger protein 385A (ZNF385A) of Homo sapiens (Human).